The sequence spans 174 residues: Probable phenolic acid decarboxylase (174 aa).

The protein belongs to the PadC family.

In terms of biological role, catalyzes the decarboxylation of phenolic acids. This chain is Probable phenolic acid decarboxylase (padC), found in Vibrio cholerae serotype O1 (strain ATCC 39315 / El Tor Inaba N16961).